A 101-amino-acid chain; its full sequence is uncharacterized protein (101 aa).

Residues 77 to 99 form a helical membrane-spanning segment; it reads VFSFMNGFTDGCICGTIIILCLI.

The protein localises to the membrane. This is an uncharacterized protein from Acanthamoeba polyphaga mimivirus (APMV).